The sequence spans 772 residues: Probable beta-glucosidase M (772 aa).

An N-terminal signal peptide occupies residues 1-20 (MLTSWGKTGFVLALALGGRA). Asparagine 259 is a glycosylation site (N-linked (GlcNAc...) asparagine). Aspartate 287 is a catalytic residue. Residues asparagine 315, asparagine 322, asparagine 438, asparagine 523, asparagine 547, asparagine 574, and asparagine 586 are each glycosylated (N-linked (GlcNAc...) asparagine).

Belongs to the glycosyl hydrolase 3 family.

The protein localises to the secreted. It catalyses the reaction Hydrolysis of terminal, non-reducing beta-D-glucosyl residues with release of beta-D-glucose.. It functions in the pathway glycan metabolism; cellulose degradation. Its function is as follows. Beta-glucosidases are one of a number of cellulolytic enzymes involved in the degradation of cellulosic biomass. Catalyzes the last step releasing glucose from the inhibitory cellobiose. This Emericella nidulans (strain FGSC A4 / ATCC 38163 / CBS 112.46 / NRRL 194 / M139) (Aspergillus nidulans) protein is Probable beta-glucosidase M (bglM).